Consider the following 701-residue polypeptide: Translation factor GUF1, mitochondrial (701 aa).

Residues Met1–Tyr29 constitute a mitochondrion transit peptide. Residues Ser23–Pro50 are compositionally biased toward low complexity. Positions Ser23 to Met85 are disordered. Positions Glu98–Thr283 constitute a tr-type G domain. Residues Ala107–Ser114, Asp172–His176, and Asn226–Asp229 each bind GTP.

Belongs to the TRAFAC class translation factor GTPase superfamily. Classic translation factor GTPase family. LepA subfamily.

The protein localises to the mitochondrion inner membrane. The catalysed reaction is GTP + H2O = GDP + phosphate + H(+). Its function is as follows. Promotes mitochondrial protein synthesis. May act as a fidelity factor of the translation reaction, by catalyzing a one-codon backward translocation of tRNAs on improperly translocated ribosomes. Binds to mitochondrial ribosomes in a GTP-dependent manner. In Pyricularia oryzae (strain 70-15 / ATCC MYA-4617 / FGSC 8958) (Rice blast fungus), this protein is Translation factor GUF1, mitochondrial.